Consider the following 243-residue polypeptide: DNA repair protein RecO (243 aa).

The protein belongs to the RecO family.

Functionally, involved in DNA repair and RecF pathway recombination. In Caulobacter vibrioides (strain NA1000 / CB15N) (Caulobacter crescentus), this protein is DNA repair protein RecO.